Consider the following 428-residue polypeptide: 3-phosphoshikimate 1-carboxyvinyltransferase (428 aa).

3-phosphoshikimate-binding residues include Lys22, Ser23, and Arg27. A phosphoenolpyruvate-binding site is contributed by Lys22. Residues Gly95 and Arg123 each coordinate phosphoenolpyruvate. 6 residues coordinate 3-phosphoshikimate: Ser170, Ser171, Gln172, Ser197, Asp316, and Lys343. Gln172 lines the phosphoenolpyruvate pocket. The active-site Proton acceptor is the Asp316. 3 residues coordinate phosphoenolpyruvate: Arg347, Arg390, and Lys414.

This sequence belongs to the EPSP synthase family. Monomer.

The protein resides in the cytoplasm. It catalyses the reaction 3-phosphoshikimate + phosphoenolpyruvate = 5-O-(1-carboxyvinyl)-3-phosphoshikimate + phosphate. It participates in metabolic intermediate biosynthesis; chorismate biosynthesis; chorismate from D-erythrose 4-phosphate and phosphoenolpyruvate: step 6/7. Its function is as follows. Catalyzes the transfer of the enolpyruvyl moiety of phosphoenolpyruvate (PEP) to the 5-hydroxyl of shikimate-3-phosphate (S3P) to produce enolpyruvyl shikimate-3-phosphate and inorganic phosphate. This Laribacter hongkongensis (strain HLHK9) protein is 3-phosphoshikimate 1-carboxyvinyltransferase.